Reading from the N-terminus, the 374-residue chain is U-box domain-containing protein 8 (374 aa).

The region spanning 4-79 (DLPNDFRCPI…LNFAHVSLKE (76 aa)) is the U-box domain. ARM repeat units lie at residues 126-165 (SSIR…NLSL), 167-206 (DDNK…SLAV), 208-248 (EVNK…ALCS), 250-288 (PDNR…KCRG), and 289-327 (GREE…CLCC).

As to expression, expressed in the whole plant.

It carries out the reaction S-ubiquitinyl-[E2 ubiquitin-conjugating enzyme]-L-cysteine + [acceptor protein]-L-lysine = [E2 ubiquitin-conjugating enzyme]-L-cysteine + N(6)-ubiquitinyl-[acceptor protein]-L-lysine.. It functions in the pathway protein modification; protein ubiquitination. In terms of biological role, functions as an E3 ubiquitin ligase. Involved in the age-dependent pseudo-self-compatibility process. The protein is U-box domain-containing protein 8 (PUB8) of Arabidopsis thaliana (Mouse-ear cress).